A 66-amino-acid polypeptide reads, in one-letter code: Movement protein TGBp3 (66 aa).

The Lumenal segment spans residues 1-2 (MD). Residues 3 to 23 (FTTLIIIGVYLLVFIVYFAKI) form a helical membrane-spanning segment. Over 24–66 (NTSVCTISISGASIEISGCDNPTLFEILPKLRPFNHGLSLPSN) the chain is Cytoplasmic.

The protein belongs to the Tymovirales TGBp3 protein family.

The protein localises to the host endoplasmic reticulum membrane. Plays a role in viral cell-to-cell propagation, by facilitating genome transport to neighboring plant cells through plasmosdesmata. May induce the formation of granular vesicles derived from the Endoplasmic reticulum, which align on actin filaments. This chain is Movement protein TGBp3, found in Trifolium (WCMV).